The following is a 149-amino-acid chain: Large ribosomal subunit protein uL15 (149 aa).

Residues 1-28 (MVIKIHDLRPAPGSKRDKIRVGRGEGSK) show a composition bias toward basic and acidic residues. Positions 1-54 (MVIKIHDLRPAPGSKRDKIRVGRGEGSKGKTAGRGTKGTKARKNVSPRFEGGQM) are disordered.

This sequence belongs to the universal ribosomal protein uL15 family. In terms of assembly, part of the 50S ribosomal subunit.

Functionally, binds to the 23S rRNA. The chain is Large ribosomal subunit protein uL15 from Saccharopolyspora erythraea (strain ATCC 11635 / DSM 40517 / JCM 4748 / NBRC 13426 / NCIMB 8594 / NRRL 2338).